The following is a 1155-amino-acid chain: Protein BREAST CANCER SUSCEPTIBILITY 2 homolog B (1155 aa).

BRCA2 repeat units follow at residues 63–97 (MPGE…ENVA), 116–150 (TAET…SDMI), 163–197 (FGVP…LEED), and 257–291 (LKVP…DPEL).

In terms of assembly, interacts with RAD51 and DMC1. Interacts with DSS1(I) and DSS1(V). Can interact with both RAD51 and DSS1(I) or both DMC1 and DSS1(I) in a tripartite complex. As to expression, expressed in flower buds.

Functionally, involved in double-strand break repair and/or homologous recombination by mediating RAD51- and DMC1-facilitated DNA repair. Plays an essential role in both somatic and meiotic homologous recombination. Is crucial for the formation of RAD51 and DMC1 foci during male meiotic homologous recombination in prophase I. The protein is Protein BREAST CANCER SUSCEPTIBILITY 2 homolog B of Arabidopsis thaliana (Mouse-ear cress).